Here is a 241-residue protein sequence, read N- to C-terminus: Probable porphobilinogen deaminase (241 aa).

The protein belongs to the HMBS family.

It catalyses the reaction 4 porphobilinogen + H2O = hydroxymethylbilane + 4 NH4(+). It functions in the pathway porphyrin-containing compound metabolism; protoporphyrin-IX biosynthesis; coproporphyrinogen-III from 5-aminolevulinate: step 2/4. Functionally, tetrapolymerization of the monopyrrole PBG into the hydroxymethylbilane pre-uroporphyrinogen in several discrete steps. This is Probable porphobilinogen deaminase (hemC) from Chlamydia trachomatis serovar D (strain ATCC VR-885 / DSM 19411 / UW-3/Cx).